The following is a 683-amino-acid chain: MNTSIPYQQNPYNPRGSSNVIQCYRCGDTCKGEVVRVHNNHFHIRCFTCQVCGCGLAQSGFFFKNQEYICTQDYQQLYGTRCDSCRDFITGEVISALGRTYHPKCFVCSLCRKPFPIGDKVTFSGKECVCQTCSQSMASSKPIKIRGPSHCAGCKEEIKHGQSLLALDKQWHVSCFKCQTCSVILTGEYISKDGVPYCESDYHAQFGIKCETCDRYISGRVLEAGGKHYHPTCARCVRCHQMFTEGEEMYLTGSEVWHPICKQAARAEKKLKHRRTSETSISPPGSSIGSPNRVICAKVDNEILNYKDLAALPKVKSIYEVQRPDLISYEPHSRYMSDEMLERCGYGESLGTLSPYSQDIYENLDLRQRRASSPGYIDSPTYSRQGMSPTFSRSPHHYYRSGPESGRSSPYHSQLDVRSSTPTSYQAPKHFHIPAGDSNIYRKPPIYKRHGDLSTATKSKTSEDISQTSKYSPIYSPDPYYASESEYWTYHGSPKVPRARRFSSGGEEDDFDRSMHKLQSGIGRLILKEEMKARSSSYADPWTPPRSSTSSREALHTAGYEMSLNGSPRSHYLADSDPLISKSASLPAYRRNGLHRTPSADLFHYDSMNAVNWGMREYKIYPYELLLVTTRGRNRLPKDVDRTRLERHLSQEEFYQVFGMTISEFDRLALWKRNELKKQARLF.

An N-acetylmethionine modification is found at M1. LIM zinc-binding domains lie at 21 to 80 (IQCY…LYGT), 80 to 140 (TRCD…MASS), 149 to 208 (SHCA…QFGI), and 208 to 268 (IKCE…ARAE). A phosphoserine mark is found at S277, S280, S282, S286, S290, S337, S372, and S373. The tract at residues 372 to 472 (SSPGYIDSPT…EDISQTSKYS (101 aa)) is disordered. A Phosphotyrosine modification is found at Y376. A phosphoserine mark is found at S379 and S388. 3 stretches are compositionally biased toward polar residues: residues 380-393 (PTYS…TFSR), 406-426 (GRSS…TSYQ), and 454-471 (STAT…TSKY). Phosphoserine occurs at positions 493, 503, and 504. T543 is subject to Phosphothreonine. A phosphoserine mark is found at S567, S576, and S607. Residues 615 to 683 (MREYKIYPYE…NELKKQARLF (69 aa)) enclose the HP domain. R631 carries the omega-N-methylarginine modification.

Directly interacts with F-actin and ABRA. In terms of tissue distribution, expressed predominantly in heart and brain.

The protein resides in the cytoplasm. Its function is as follows. May act as scaffold protein. May stimulate ABRA activity and ABRA-dependent SRF transcriptional activity. This chain is Actin-binding LIM protein 3 (ABLIM3), found in Homo sapiens (Human).